A 138-amino-acid polypeptide reads, in one-letter code: Basic phospholipase A2 RV-4 (138 aa).

Residues 1–16 (MRTLWIVAVCLIGVEG) form the signal peptide. Intrachain disulfides connect Cys42–Cys131, Cys44–Cys60, Cys59–Cys111, Cys65–Cys138, Cys66–Cys104, Cys73–Cys97, and Cys91–Cys102. Ca(2+) is bound by residues Tyr43, Gly45, and Gly47. The active site involves His63. Asp64 is a Ca(2+) binding site. The active site involves Asp105.

Belongs to the phospholipase A2 family. Group II subfamily. D49 sub-subfamily. As to quaternary structure, heterodimer of a weakly toxic basic protein having phospholipase A2 activity (RV-4) and a non-toxic acidic protein which inhibits its enzymatic activity but potentiates its lethal potency and neurotoxicity (RV-7). Requires Ca(2+) as cofactor. Expressed by the venom gland.

The protein localises to the secreted. The enzyme catalyses a 1,2-diacyl-sn-glycero-3-phosphocholine + H2O = a 1-acyl-sn-glycero-3-phosphocholine + a fatty acid + H(+). Heterodimer RV-4/RV-7: acts as a presynaptic neurotoxin. Its function is as follows. Monomer: snake venom phospholipase A2 (PLA2) that acts as a presynaptic neurotoxin. PLA2 catalyzes the calcium-dependent hydrolysis of the 2-acyl groups in 3-sn-phosphoglycerides. In Daboia siamensis (Eastern Russel's viper), this protein is Basic phospholipase A2 RV-4.